The following is a 326-amino-acid chain: MTAPQPHTITPPTPGSKIVLIGAGDVGIAYAYTLVNQGLTDHLAIIDLDERKTWGHVQDLNHAVPWSHHNTRVTVGTYEDCRDAAMVCICAGAAQKPGETRLDLVAKNTAIFKTIVGDVMSHGFNGIFLVASNPVDILSYATWKFSGMDSSRVIGSGTILDTARFRYALGRYFDLAPTSVHAYVIGEHGDTELPVLSAGSVAGTSIHHRLEMIGESADEDVDEIFVKTRDAAYEIIQAKGSTSFGIGMGLARITQAVFSNQDVVLPISTLLQGEYGFEDIYIGTPAVINRQGVRHAVELQLDSEEKERFDHSANVLRKVMGEAGLI.

NAD(+) contacts are provided by residues V26, D47, K52, Y78, and G92–A93. Positions 95 and 101 each coordinate substrate. Residues T114, A131–N133, and S156 each bind NAD(+). Residue N133 to D136 coordinates substrate. Position 161 to 164 (D161 to R164) interacts with substrate. Beta-D-fructose 1,6-bisphosphate-binding residues include R166 and H181. H188 functions as the Proton acceptor in the catalytic mechanism. Y233 carries the post-translational modification Phosphotyrosine. A substrate-binding site is contributed by T242.

This sequence belongs to the LDH/MDH superfamily. LDH family. In terms of assembly, homotetramer.

It is found in the cytoplasm. It carries out the reaction (S)-lactate + NAD(+) = pyruvate + NADH + H(+). Its pathway is fermentation; pyruvate fermentation to lactate; (S)-lactate from pyruvate: step 1/1. With respect to regulation, allosterically activated by fructose 1,6-bisphosphate (FBP). Catalyzes the conversion of lactate to pyruvate. The sequence is that of L-lactate dehydrogenase from Corynebacterium jeikeium (strain K411).